Reading from the N-terminus, the 236-residue chain is TVP38/TMEM64 family membrane protein YdjX (236 aa).

A run of 5 helical transmembrane segments spans residues 7–27 (FLFA…FGLF), 50–70 (LYIL…ILVI), 72–92 (GGIV…ATLA), 156–176 (IAFW…IVIY), and 192–212 (FILQ…LAKL). The tract at residues 73–183 (GIVFGPLLGT…VIYTVMASDL (111 aa)) is VTT domain.

This sequence belongs to the TVP38/TMEM64 family.

It is found in the cell membrane. In Escherichia coli (strain K12), this protein is TVP38/TMEM64 family membrane protein YdjX (ydjX).